A 210-amino-acid chain; its full sequence is Inner membrane-spanning protein YciB (210 aa).

6 consecutive transmembrane segments (helical) span residues 12 to 32 (EVSP…FFFA), 53 to 73 (IFIA…ASWI), 78 to 98 (LPMM…LTLW), 115 to 135 (LFGA…GYVF), 148 to 168 (KLTI…EVIW), and 175 to 195 (FWVA…TLAQ).

This sequence belongs to the YciB family.

The protein resides in the cell inner membrane. Functionally, plays a role in cell envelope biogenesis, maintenance of cell envelope integrity and membrane homeostasis. The protein is Inner membrane-spanning protein YciB of Rhizobium meliloti (strain 1021) (Ensifer meliloti).